The primary structure comprises 341 residues: MIRADLATIPTYVPGRRLVDATKLSSNEVSFSPLPAAVDAVTEATWGANRYPDMGAVELREALAEHLEVEFDQVTVGCGSSALCQQLVQATCAQGDEVIFPWRSFEAYPIFAQVAGATPVAIPLTADQNHDLDAMAAAITDKTRLIFICNPNNPSGTTITQAQFDNFMEKVPNDVVVGLDEAYFEFNRADDTPVATEEIHRHDNVIGLRTFSKAYGLAGLRVGYAFGNAEIIAAMNKVAIPFAVNSAAQAAALASLNSADELMERVEETVEKRDAVVSALGAAPTQANFVWLPGEGAAELAAKLAEHGIVIRAFPEGARISVTNAEETDKLLRAWEAINAG.

Lys-213 bears the N6-(pyridoxal phosphate)lysine mark.

Belongs to the class-II pyridoxal-phosphate-dependent aminotransferase family. Homodimer. Pyridoxal 5'-phosphate is required as a cofactor.

The enzyme catalyses an aromatic L-alpha-amino acid + 2-oxoglutarate = an aromatic oxo-acid + L-glutamate. Aminotransferase that catalyzes the conversion of aromatic amino acids and 2-oxoglutarate into corresponding aromatic oxo acids and L-glutamate. May catalyze the transamination reaction in phenylalanine biosynthesis. This is Aromatic amino acid aminotransferase from Corynebacterium glutamicum (strain ATCC 13032 / DSM 20300 / JCM 1318 / BCRC 11384 / CCUG 27702 / LMG 3730 / NBRC 12168 / NCIMB 10025 / NRRL B-2784 / 534).